The primary structure comprises 1232 residues: Protein transport protein sec-16A.1 (1232 aa).

6 disordered regions span residues glycine 18–alanine 134, arginine 172–glutamate 193, proline 815–aspartate 843, lysine 866–glutamate 942, glutamine 972–glutamine 1069, and proline 1140–aspartate 1232. Over residues aspartate 26–serine 37 the composition is skewed to polar residues. Low complexity predominate over residues arginine 67 to proline 76. The segment covering serine 78–asparagine 100 has biased composition (polar residues). Residues glutamine 817–serine 836 are compositionally biased toward polar residues. Positions serine 896 to threonine 914 are enriched in low complexity. Polar residues-rich tracts occupy residues glutamine 1046–threonine 1060, serine 1149–serine 1159, and tyrosine 1168–alanine 1178. Residues proline 1194–proline 1203 are compositionally biased toward low complexity. The segment covering proline 1222–aspartate 1232 has biased composition (polar residues).

This sequence belongs to the SEC16 family. Interacts with tfg-1 (via N-terminus); the interaction is direct and is required for both the localization of tfg-1 and to maintain the distribution of sec-16A.1 at endoplasmic reticulum exit sites (ERES).

It localises to the endoplasmic reticulum. It is found in the endoplasmic reticulum-Golgi intermediate compartment. In terms of biological role, plays a role in the organization of the endoplasmic reticulum exit sites (ERES), also known as transitional endoplasmic reticulum (tER). In association with tfg-1, accumulates at ERES to positively regulate secretory cargo trafficking from the endoplasmic reticulum to the endoplasmic reticulum-Golgi intermediate compartment (ERGIC) and Golgi apparatus. In Caenorhabditis elegans, this protein is Protein transport protein sec-16A.1.